The following is a 59-amino-acid chain: MAVPKRKTSPSKRGMRRSADALKAPTYIEDKNSGELRRPHHIDLKTGMYRGRSVLPPKD.

The span at 1–16 (MAVPKRKTSPSKRGMR) shows a compositional bias: basic residues. Positions 1-59 (MAVPKRKTSPSKRGMRRSADALKAPTYIEDKNSGELRRPHHIDLKTGMYRGRSVLPPKD) are disordered. The span at 28-44 (IEDKNSGELRRPHHIDL) shows a compositional bias: basic and acidic residues.

Belongs to the bacterial ribosomal protein bL32 family.

The protein is Large ribosomal subunit protein bL32 of Bartonella quintana (strain Toulouse) (Rochalimaea quintana).